Consider the following 212-residue polypeptide: Phosphatidylserine decarboxylase proenzyme (212 aa).

Serine 182 (schiff-base intermediate with substrate; via pyruvic acid) is an active-site residue. Residue serine 182 is modified to Pyruvic acid (Ser); by autocatalysis.

Belongs to the phosphatidylserine decarboxylase family. PSD-A subfamily. In terms of assembly, heterodimer of a large membrane-associated beta subunit and a small pyruvoyl-containing alpha subunit. The cofactor is pyruvate. Post-translationally, is synthesized initially as an inactive proenzyme. Formation of the active enzyme involves a self-maturation process in which the active site pyruvoyl group is generated from an internal serine residue via an autocatalytic post-translational modification. Two non-identical subunits are generated from the proenzyme in this reaction, and the pyruvate is formed at the N-terminus of the alpha chain, which is derived from the carboxyl end of the proenzyme. The post-translation cleavage follows an unusual pathway, termed non-hydrolytic serinolysis, in which the side chain hydroxyl group of the serine supplies its oxygen atom to form the C-terminus of the beta chain, while the remainder of the serine residue undergoes an oxidative deamination to produce ammonia and the pyruvoyl prosthetic group on the alpha chain.

Its subcellular location is the cell membrane. It carries out the reaction a 1,2-diacyl-sn-glycero-3-phospho-L-serine + H(+) = a 1,2-diacyl-sn-glycero-3-phosphoethanolamine + CO2. It functions in the pathway phospholipid metabolism; phosphatidylethanolamine biosynthesis; phosphatidylethanolamine from CDP-diacylglycerol: step 2/2. Functionally, catalyzes the formation of phosphatidylethanolamine (PtdEtn) from phosphatidylserine (PtdSer). The polypeptide is Phosphatidylserine decarboxylase proenzyme (Paraburkholderia phymatum (strain DSM 17167 / CIP 108236 / LMG 21445 / STM815) (Burkholderia phymatum)).